The chain runs to 394 residues: Phosphopentomutase (394 aa).

Residues aspartate 14, aspartate 287, histidine 292, aspartate 328, histidine 329, and histidine 340 each coordinate Mn(2+).

Belongs to the phosphopentomutase family. Mn(2+) is required as a cofactor.

It localises to the cytoplasm. The enzyme catalyses 2-deoxy-alpha-D-ribose 1-phosphate = 2-deoxy-D-ribose 5-phosphate. It carries out the reaction alpha-D-ribose 1-phosphate = D-ribose 5-phosphate. It participates in carbohydrate degradation; 2-deoxy-D-ribose 1-phosphate degradation; D-glyceraldehyde 3-phosphate and acetaldehyde from 2-deoxy-alpha-D-ribose 1-phosphate: step 1/2. Isomerase that catalyzes the conversion of deoxy-ribose 1-phosphate (dRib-1-P) and ribose 1-phosphate (Rib-1-P) to deoxy-ribose 5-phosphate (dRib-5-P) and ribose 5-phosphate (Rib-5-P), respectively. The sequence is that of Phosphopentomutase from Listeria monocytogenes serovar 1/2a (strain ATCC BAA-679 / EGD-e).